A 283-amino-acid polypeptide reads, in one-letter code: Non-selective voltage-gated ion channel VDAC3 (283 aa).

C2 carries the N-acetylcysteine modification. T4 carries the phosphothreonine modification. N6-acetyllysine occurs at positions 12, 15, and 20. 2 beta stranded membrane passes run 26 to 35 (MVKIDLRTKS) and 39 to 47 (VEFSTSGHA). Residue K53 forms a Glycyl lysine isopeptide (Lys-Gly) (interchain with G-Cter in ubiquitin) linkage. The next 3 beta stranded transmembrane spans lie at 54 to 64 (ASGNLETKYKI), 69 to 76 (LTFTQKWN), and 80 to 89 (TLGTEISWEN). K90 carries the N6-acetyllysine modification. The chain crosses the membrane as a beta stranded span at residues 95–104 (LKLTLDTIFV). Residues K109 and K110 each participate in a glycyl lysine isopeptide (Lys-Gly) (interchain with G-Cter in ubiquitin) cross-link. 10 consecutive transmembrane segments (beta stranded) span residues 111–120 (SGKLKASYKR), 123–130 (FSLGSNVD), 137–145 (TIYGWAVLA), 150–158 (LAGYQMSFD), 163–175 (KLSQ…GYKA), 178–185 (FQLHTHVN), 189–198 (EFGGSIYQKV), 202–211 (IETSINLAWT), 218–227 (RFGIAAKYKL), and 231–238 (TSLSAKVN). At S241 the chain carries Phosphoserine. Residues 242–244 (LIG) and 260–264 (SALID) each bind NAD(+). 2 beta stranded membrane-spanning segments follow: residues 242 to 251 (LIGLGYTQTL) and 254 to 263 (GVKLTLSALI). K266 is subject to N6-acetyllysine; alternate. Residue K266 forms a Glycyl lysine isopeptide (Lys-Gly) (interchain with G-Cter in ubiquitin); alternate linkage. Residues 273 to 282 (HKVGLGFELE) form a beta stranded membrane-spanning segment.

This sequence belongs to the eukaryotic mitochondrial porin family. As to quaternary structure, interacts with ARMC12 in a TBC1D21-dependent manner. Interacts with MISFA. In terms of processing, ubiquitinated by PRKN during mitophagy, leading to its degradation and enhancement of mitophagy. Deubiquitinated by USP30.

The protein localises to the mitochondrion outer membrane. It is found in the membrane. The enzyme catalyses chloride(in) = chloride(out). It catalyses the reaction K(+)(in) = K(+)(out). Functionally, non-selective voltage-gated ion channel that mediates the transport of anions and cations through the mitochondrion outer membrane and plasma membrane. Forms a high-conducting channel with a stable open state and a voltage-induced closure with a mild preference for anions over cations. Involved in male fertility and sperm mitochondrial sheath formation. The protein is Non-selective voltage-gated ion channel VDAC3 of Bos taurus (Bovine).